The following is a 244-amino-acid chain: DNA repair protein RecO (244 aa).

It belongs to the RecO family.

Functionally, involved in DNA repair and RecF pathway recombination. The chain is DNA repair protein RecO from Caldicellulosiruptor saccharolyticus (strain ATCC 43494 / DSM 8903 / Tp8T 6331).